Reading from the N-terminus, the 123-residue chain is MRIQSLLLLGALLAVGSQPPAAFGRKKGEKSGGCPPDDGPCLLSVPDQCMEDSQCPWTRKCCYKACFRQCVPRVSVKLGSCPEDQLRCLSPMNHLCHKDADCSGKKRCCPSACGRDCRDPARG.

Positions 1–24 (MRIQSLLLLGALLAVGSQPPAAFG) are cleaved as a signal peptide. WAP domains are found at residues 27-73 (KGEK…CVPR) and 74-121 (VSVK…RDPA). Intrachain disulfides connect C34–C62, C41–C66, C49–C61, C55–C70, C81–C109, C88–C113, C96–C108, and C102–C117.

The protein localises to the secreted. Functionally, putative acid-stable proteinase inhibitor. This is WAP four-disulfide core domain protein 5 (WFDC5) from Saimiri boliviensis boliviensis (Bolivian squirrel monkey).